A 207-amino-acid chain; its full sequence is Pyrrolidone-carboxylate peptidase (207 aa).

Active-site residues include Glu80, Cys143, and His167.

It belongs to the peptidase C15 family. In terms of assembly, homotetramer.

The protein localises to the cytoplasm. The catalysed reaction is Release of an N-terminal pyroglutamyl group from a polypeptide, the second amino acid generally not being Pro.. Its function is as follows. Removes 5-oxoproline from various penultimate amino acid residues except L-proline. This is Pyrrolidone-carboxylate peptidase from Coprothermobacter proteolyticus (strain ATCC 35245 / DSM 5265 / OCM 4 / BT).